The primary structure comprises 180 residues: Large ribosomal subunit protein uL6 (180 aa).

The protein belongs to the universal ribosomal protein uL6 family. Part of the 50S ribosomal subunit.

Functionally, this protein binds to the 23S rRNA, and is important in its secondary structure. It is located near the subunit interface in the base of the L7/L12 stalk, and near the tRNA binding site of the peptidyltransferase center. This Clostridium botulinum (strain Loch Maree / Type A3) protein is Large ribosomal subunit protein uL6.